We begin with the raw amino-acid sequence, 368 residues long: MIKKTILNDTHRALGAKMVDFSGWEMPIHYGSQIDEHHHVRRNAGIFDVSHMTVIDLHGTQVRPLLRRLLANSVDKLKVPGKALYSCMLNPQGGVIDDLIVYYLREDYFRFIVNAATREKDLAWINTQASAFNVRVEERADLAMLAVQGPAARAQVTNLLAETHRDAVEKLGRFAALEVASHSKKTLFISRTGYTGEDGFEILLPQEETITLWNALLKTGVKPIGLGARDTLRLEAGMNLYGQDMDEQVSPYEAALGWTVMLDEGRNFIGRNVLEQQKTNGVSRQMIGLLMDEKGVLRHGQKVLTAQGEGHILSGTFSPTLNKAIGFARVPAGKPSEVRVNIRDRAIPVRVVKFPFVREGQTQPNIFD.

Belongs to the GcvT family. The glycine cleavage system is composed of four proteins: P, T, L and H.

It carries out the reaction N(6)-[(R)-S(8)-aminomethyldihydrolipoyl]-L-lysyl-[protein] + (6S)-5,6,7,8-tetrahydrofolate = N(6)-[(R)-dihydrolipoyl]-L-lysyl-[protein] + (6R)-5,10-methylene-5,6,7,8-tetrahydrofolate + NH4(+). Functionally, the glycine cleavage system catalyzes the degradation of glycine. This chain is Aminomethyltransferase, found in Xylella fastidiosa (strain M12).